A 248-amino-acid polypeptide reads, in one-letter code: Mannose-binding protein C (248 aa).

The first 20 residues, Met1–Ser20, serve as a signal peptide directing secretion. Residues Gly42–Glu99 form the Collagen-like domain. The segment at Ile43–Glu111 is disordered. Pro47 carries the post-translational modification 4-hydroxyproline. A compositionally biased stretch (basic and acidic residues) spans Lys49–Glu61. Pro73, Pro79, Pro82, and Pro88 each carry 4-hydroxyproline. Over residues Pro82–Lys91 the composition is skewed to low complexity. Residues Arg112–Leu130 are a coiled coil. Positions Val134 to Glu245 constitute a C-type lectin domain. 2 disulfide bridges follow: Cys155–Cys244 and Cys222–Cys236.

In terms of assembly, oligomeric complex of 3 or more homotrimers. Interacts with MASP1 and MASP2. Interacts with MEP1A and MEP1B and may inhibit their catalytic activity. In terms of processing, hydroxylation on proline residues within the sequence motif, GXPG, is most likely to be 4-hydroxy as this fits the requirement for 4-hydroxylation in vertebrates.

It localises to the secreted. Calcium-dependent lectin involved in innate immune defense. Binds mannose, fucose and N-acetylglucosamine on different microorganisms and activates the lectin complement pathway. Binds to late apoptotic cells, as well as to apoptotic blebs and to necrotic cells, but not to early apoptotic cells, facilitating their uptake by macrophages. The polypeptide is Mannose-binding protein C (MBL2) (Macaca fascicularis (Crab-eating macaque)).